We begin with the raw amino-acid sequence, 82 residues long: Penaeidin-3h (82 aa).

The N-terminal stretch at 1–19 (MRLVVCLVFLASFALVCQG) is a signal peptide. Q20 bears the Pyrrolidone carboxylic acid mark. 2 disulfide bridges follow: C55/C73 and C67/C74. S81 bears the Serine amide mark.

It belongs to the penaeidin family.

It localises to the cytoplasmic granule. Antibacterial and antifungal activity. Presents chitin-binding activity. The sequence is that of Penaeidin-3h from Penaeus vannamei (Whiteleg shrimp).